The primary structure comprises 394 residues: Nuclear pore glycoprotein p62 (394 aa).

Tandem repeats lie at residues 22 to 23 (FG), 50 to 51 (FG), 75 to 76 (FG), 77 to 78 (FG), and 116 to 117 (FG). A 5 X 2 AA repeats of F-G region spans residues 22-117 (FGLSTGTPAA…GTSAAPPAFG (96 aa)). Positions 45–57 (KTTFSFGTPAPTA) are enriched in low complexity. The disordered stretch occupies residues 45 to 73 (KTTFSFGTPAPTAGIGGGDADNSKAQAPP). Residues 211–341 (SYHQLEEHIN…DNLNEANKGQ (131 aa)) are a coiled coil.

Belongs to the nucleoporin NSP1/NUP62 family. In terms of tissue distribution, expressed in adult male accessory glands (at protein level).

The protein localises to the nucleus. It localises to the chromosome. It is found in the nucleus envelope. Its subcellular location is the nuclear pore complex. The protein resides in the cytoplasm. The protein localises to the cytoskeleton. It localises to the spindle pole. It is found in the microtubule organizing center. Its subcellular location is the centrosome. Its function is as follows. Essential component of the nuclear pore complex. The N-terminal is probably involved in nucleocytoplasmic transport. The C-terminal is involved in protein-protein interaction probably via coiled-coil formation, promotes its association with centrosomes and may function in anchorage of Nup62 to the pore complex. Binds to transcriptionally active genes. Negatively regulates chromatin attachment to the nuclear envelope, probably by preventing chromatin tethering by Nup154. This Drosophila melanogaster (Fruit fly) protein is Nuclear pore glycoprotein p62.